Consider the following 344-residue polypeptide: Coproporphyrin III ferrochelatase (344 aa).

Ser52 is a binding site for Fe-coproporphyrin III. Residue Cys113 participates in [2Fe-2S] cluster binding. Fe-coproporphyrin III is bound at residue Tyr116. Fe(2+) is bound by residues His172 and Glu255. [2Fe-2S] cluster is bound by residues Cys316, Cys325, and Cys330.

It belongs to the ferrochelatase family. [2Fe-2S] cluster is required as a cofactor.

It is found in the cytoplasm. It catalyses the reaction Fe-coproporphyrin III + 2 H(+) = coproporphyrin III + Fe(2+). It functions in the pathway porphyrin-containing compound metabolism; protoheme biosynthesis. Functionally, involved in coproporphyrin-dependent heme b biosynthesis. Catalyzes the insertion of ferrous iron into coproporphyrin III to form Fe-coproporphyrin III. The protein is Coproporphyrin III ferrochelatase of Mycobacterium bovis (strain ATCC BAA-935 / AF2122/97).